Consider the following 635-residue polypeptide: CCR4-NOT transcription complex subunit 10 (635 aa).

Thr-45 is subject to Phosphothreonine. Residues 131–165 (LVARLEALEKAMAALVATLQLQLLLATNQLNRAEA) adopt a coiled-coil conformation. Disordered regions lie at residues 396 to 416 (EERQ…QSAG) and 450 to 474 (SEDV…DNNF). Basic and acidic residues predominate over residues 456-470 (PEPKDPTQESWRHPQ).

The protein belongs to the CNOT10 family. In terms of assembly, component of the CCR4-NOT complex. CNOT10 and CNOT11 form a subcomplex docked to the CNOT1 scaffold.

Its subcellular location is the cytoplasm. The protein resides in the nucleus. Functionally, component of the CCR4-NOT complex which is one of the major cellular mRNA deadenylases and is linked to various cellular processes including bulk mRNA degradation, miRNA-mediated repression, translational repression during translational initiation and general transcription regulation. Additional complex functions may be a consequence of its influence on mRNA expression. Is not required for association of CNOT7 to the CCR4-NOT complex. The polypeptide is CCR4-NOT transcription complex subunit 10 (Not10) (Drosophila melanogaster (Fruit fly)).